The chain runs to 342 residues: Protein-glutamate methylesterase/protein-glutamine glutaminase 3 (342 aa).

In terms of domain architecture, Response regulatory spans 3 to 120; the sequence is RVLVVEDMPT…SPGFADDARR (118 aa). Asp54 is modified (4-aspartylphosphate). Positions 152–342 constitute a CheB-type methylesterase domain; that stretch reads DVPRGRVVAV…ADRLALWLRR (191 aa). Active-site residues include Ser164, His191, and Asp285.

This sequence belongs to the CheB family. Phosphorylated by CheA. Phosphorylation of the N-terminal regulatory domain activates the methylesterase activity.

The protein localises to the cytoplasm. It carries out the reaction [protein]-L-glutamate 5-O-methyl ester + H2O = L-glutamyl-[protein] + methanol + H(+). It catalyses the reaction L-glutaminyl-[protein] + H2O = L-glutamyl-[protein] + NH4(+). Its function is as follows. Involved in chemotaxis. Part of a chemotaxis signal transduction system that modulates chemotaxis in response to various stimuli. Catalyzes the demethylation of specific methylglutamate residues introduced into the chemoreceptors (methyl-accepting chemotaxis proteins or MCP) by CheR. Also mediates the irreversible deamidation of specific glutamine residues to glutamic acid. This Anaeromyxobacter dehalogenans (strain 2CP-C) protein is Protein-glutamate methylesterase/protein-glutamine glutaminase 3.